Here is a 79-residue protein sequence, read N- to C-terminus: Cell division protein ZapB (79 aa).

Residues 1 to 78 (MSLEALDQLQ…LNSLLGKMDD (78 aa)) are a coiled coil.

Belongs to the ZapB family. Homodimer. The ends of the coiled-coil dimer bind to each other, forming polymers. Interacts with FtsZ.

It is found in the cytoplasm. In terms of biological role, non-essential, abundant cell division factor that is required for proper Z-ring formation. It is recruited early to the divisome by direct interaction with FtsZ, stimulating Z-ring assembly and thereby promoting cell division earlier in the cell cycle. Its recruitment to the Z-ring requires functional FtsA or ZipA. The polypeptide is Cell division protein ZapB (Hamiltonella defensa subsp. Acyrthosiphon pisum (strain 5AT)).